A 378-amino-acid chain; its full sequence is MADYYDLLGVSKDADGDTLKRAYRRLARQYHPDINKDPGAEDRFKEIGRAYEVLSDPQTRGRYDQFGEAGLGGAAGMPDVGDMGGFADLFETFFSGFGGAGGSGGARPRRRGPQQGDDLRYDLKIDFEQAVFGQEREIKIPHLETCDTCNGTGAKVGSGPTTCSTCGGVGQVRRATRTPFGSFTQVAECPSCEGTGQVIADPCPACAGQGVRQVRKKLRINIPAGVDTGTRLRVAGEGNAGLRGGPSGDLYVFLTVKSHPQLRRDGITVLSEVNVSYLQAILGDIIEVDTVDGNTSLEIPAGTQPNAVLTLENKGIPKLGNPVARGNQRISINVKLPIRLSDEERGLLEELAGHHSAKGRQHHHHNSGLFARLFGQKG.

In terms of domain architecture, J spans 3 to 67 (DYYDLLGVSK…QTRGRYDQFG (65 aa)). The CR-type zinc finger occupies 133–215 (GQEREIKIPH…CAGQGVRQVR (83 aa)). Residues Cys-146, Cys-149, Cys-163, Cys-166, Cys-189, Cys-192, Cys-203, and Cys-206 each contribute to the Zn(2+) site. 4 CXXCXGXG motif repeats span residues 146–153 (CDTCNGTG), 163–170 (CSTCGGVG), 189–196 (CPSCEGTG), and 203–210 (CPACAGQG).

This sequence belongs to the DnaJ family. Homodimer. It depends on Zn(2+) as a cofactor.

The protein resides in the cytoplasm. Participates actively in the response to hyperosmotic and heat shock by preventing the aggregation of stress-denatured proteins and by disaggregating proteins, also in an autonomous, DnaK-independent fashion. Unfolded proteins bind initially to DnaJ; upon interaction with the DnaJ-bound protein, DnaK hydrolyzes its bound ATP, resulting in the formation of a stable complex. GrpE releases ADP from DnaK; ATP binding to DnaK triggers the release of the substrate protein, thus completing the reaction cycle. Several rounds of ATP-dependent interactions between DnaJ, DnaK and GrpE are required for fully efficient folding. Also involved, together with DnaK and GrpE, in the DNA replication of plasmids through activation of initiation proteins. The protein is Chaperone protein DnaJ of Prochlorococcus marinus (strain MIT 9313).